The sequence spans 468 residues: H(+)/Cl(-) exchange transporter ClcA (468 aa).

Residues 1–30 (MSTRETFKISLLAKMPKDVINQFLSKDKTP) lie on the Cytoplasmic side of the membrane. Residues 31–67 (FSVLFLSLLVGILAGLVGTYFEQAVHLVSETRTDWLK) traverse the membrane as a helical segment. The Periplasmic segment spans residues 68–74 (SEIGSFL). A helical transmembrane segment spans residues 75 to 98 (PLWLAAFLISAFLAFIGYFLVHRF). The Selectivity filter part_1 signature appears at 104–108 (GSGIP). Residue S105 coordinates chloride. The segment at residues 107–114 (IPEIEGAM) is an intramembrane region (helical). The Cytoplasmic segment spans residues 115 to 121 (DGMRPVR). 2 consecutive transmembrane segments (helical) span residues 122-139 (WWRV…ALGS) and 146-164 (EGPT…SDIF). The short motif at 144–148 (GREGP) is the Selectivity filter part_2 element. The Cytoplasmic segment spans residues 165–174 (RVKNEDTRHS). 2 intramembrane regions (helical) span residues 175–187 (LLAA…LAAA) and 191–199 (PLAGIMFVI). The Cytoplasmic portion of the chain corresponds to 200 to 212 (EEMRPQFRYTLIS). The helical transmembrane segment at 213–230 (VRAVIISAVAANIVFRVI) threads the bilayer. At 231 to 250 (NGQDAVITMPQYDAPELSTL) the chain is on the periplasmic side. A helical membrane pass occupies residues 251–279 (GLFLLLGALFGVFGVLFNYLITLAQDLFV). Over 280 to 285 (KFHRND) the chain is Cytoplasmic. The chain crosses the membrane as a helical span at residues 286–307 (RKRYLLTGSMIGGCFGLLLLYV). Over 308–327 (PELTGGGISLIPTITNGGYG) the chain is Periplasmic. Helical transmembrane passes span 328–347 (AGIL…LCFG) and 353–374 (GIFA…LIAK). The short motif at 353–357 (GIFAP) is the Selectivity filter part_3 element. Residues I354 and F355 each contribute to the chloride site. Over 375–384 (MWFPELNIEP) the chain is Periplasmic. The segment at residues 385–399 (GMFAIAGMGALFAAT) is an intramembrane region (helical). Positions 400–402 (VRA) form an intramembrane region, note=Loop between two helices. Positions 403–414 (PITGILLVIEMT) form an intramembrane region, helical. An intramembrane region (note=Loop between two helices) is located at residues 415–419 (NNYHL). A helical transmembrane segment spans residues 420 to 436 (ILPLIITSLGAVIFAQL). Over 437-468 (LGGQPIYSQLLHRTLKNQKLQQQDLPPQSPNS) the chain is Cytoplasmic. Residue Y443 coordinates chloride.

It belongs to the chloride channel (TC 2.A.49) family. ClcA subfamily. In terms of assembly, homodimer.

It is found in the cell inner membrane. The enzyme catalyses 2 chloride(in) + H(+)(out) = 2 chloride(out) + H(+)(in). In terms of biological role, proton-coupled chloride transporter. Functions as antiport system and exchanges two chloride ions for 1 proton. Probably acts as an electrical shunt for an outwardly-directed proton pump that is linked to amino acid decarboxylation, as part of the extreme acid resistance (XAR) response. The protein is H(+)/Cl(-) exchange transporter ClcA of Vibrio cholerae serotype O1 (strain ATCC 39315 / El Tor Inaba N16961).